The sequence spans 426 residues: Tyrosine--tRNA ligase (426 aa).

Residue tyrosine 35 participates in L-tyrosine binding. The 'HIGH' region signature appears at 40-49 (PTAPSLHIGH). L-tyrosine is bound by residues tyrosine 174 and glutamine 178. The 'KMSKS' region motif lies at 234–238 (KFGKT). ATP is bound at residue lysine 237. An S4 RNA-binding domain is found at 358 to 418 (PRVVDALVAT…WAVIRRGRRA (61 aa)).

The protein belongs to the class-I aminoacyl-tRNA synthetase family. TyrS type 1 subfamily. Homodimer.

Its subcellular location is the cytoplasm. The enzyme catalyses tRNA(Tyr) + L-tyrosine + ATP = L-tyrosyl-tRNA(Tyr) + AMP + diphosphate + H(+). Its function is as follows. Catalyzes the attachment of tyrosine to tRNA(Tyr) in a two-step reaction: tyrosine is first activated by ATP to form Tyr-AMP and then transferred to the acceptor end of tRNA(Tyr). The chain is Tyrosine--tRNA ligase from Acidothermus cellulolyticus (strain ATCC 43068 / DSM 8971 / 11B).